Here is a 180-residue protein sequence, read N- to C-terminus: Dual-action ribosomal maturation protein DarP (180 aa).

This sequence belongs to the DarP family.

It localises to the cytoplasm. Functionally, member of a network of 50S ribosomal subunit biogenesis factors which assembles along the 30S-50S interface, preventing incorrect 23S rRNA structures from forming. Promotes peptidyl transferase center (PTC) maturation. The protein is Dual-action ribosomal maturation protein DarP of Chromobacterium violaceum (strain ATCC 12472 / DSM 30191 / JCM 1249 / CCUG 213 / NBRC 12614 / NCIMB 9131 / NCTC 9757 / MK).